Consider the following 299-residue polypeptide: Ribosomal RNA small subunit methyltransferase H (299 aa).

Residues 45–47 (GGH), Asp-64, Phe-92, Asp-108, and Gln-115 contribute to the S-adenosyl-L-methionine site. Residues 275 to 299 (PQSDEQAKNPRSRSAKLRLAQRKEQ) are disordered. Over residues 284–299 (PRSRSAKLRLAQRKEQ) the composition is skewed to basic residues.

It belongs to the methyltransferase superfamily. RsmH family.

It localises to the cytoplasm. The catalysed reaction is cytidine(1402) in 16S rRNA + S-adenosyl-L-methionine = N(4)-methylcytidine(1402) in 16S rRNA + S-adenosyl-L-homocysteine + H(+). Its function is as follows. Specifically methylates the N4 position of cytidine in position 1402 (C1402) of 16S rRNA. The chain is Ribosomal RNA small subunit methyltransferase H from Gloeothece citriformis (strain PCC 7424) (Cyanothece sp. (strain PCC 7424)).